A 192-amino-acid polypeptide reads, in one-letter code: Glycerol-3-phosphate acyltransferase (192 aa).

The next 5 membrane-spanning stretches (helical) occupy residues F4–I24, L48–Y68, Y74–F94, G101–L121, and L125–L145.

The protein belongs to the PlsY family. Probably interacts with PlsX.

It localises to the cell inner membrane. It carries out the reaction an acyl phosphate + sn-glycerol 3-phosphate = a 1-acyl-sn-glycero-3-phosphate + phosphate. It functions in the pathway lipid metabolism; phospholipid metabolism. Its function is as follows. Catalyzes the transfer of an acyl group from acyl-phosphate (acyl-PO(4)) to glycerol-3-phosphate (G3P) to form lysophosphatidic acid (LPA). This enzyme utilizes acyl-phosphate as fatty acyl donor, but not acyl-CoA or acyl-ACP. In Histophilus somni (strain 129Pt) (Haemophilus somnus), this protein is Glycerol-3-phosphate acyltransferase.